We begin with the raw amino-acid sequence, 426 residues long: COMPASS component SWD1 (426 aa).

5 WD repeats span residues 24–63 (ENPLRTECLQFSPCGDYLALGCANGALVIYDMDTFRPICV), 70–109 (AHVRPITSIAWSPDGRLLLTSSRDWSIKLWDLSKPSKPLK), 212–251 (ITSSNIKHLIVSQNGERLAINCSDRTIRQYEISIDDENSA), 264–307 (INKL…LVRV), and 310–350 (GAEE…KWSA). The DNA site is built by R236 and K266.

Component of the Set1C/COMPASS complex which consists of SET1(2), BRE2(2), SPP1(2), SDC1(1), SHG1(1), SWD1(1), SWD2(1), and SWD3(1).

The protein resides in the nucleus. The protein localises to the chromosome. Its subcellular location is the telomere. Functionally, component of the Set1C/COMPASS complex that specifically mono-, di- and trimethylates histone H3 to form H3K4me1/2/3, which subsequently plays a role in telomere length maintenance and transcription elongation regulation. COMPASS recognizes ubiquitinated H2B on one face of the nucleosome which stimulates the methylation of H3 on the opposing face. SWD1/CPS50 acts as an assembly and regulatory hub for COMPASS complex formation. Serves as a highly utilized surface for COMPASS interaction with the nucleosome. The sequence is that of COMPASS component SWD1 from Saccharomyces cerevisiae (strain ATCC 204508 / S288c) (Baker's yeast).